A 288-amino-acid chain; its full sequence is Probable prolyl 4-hydroxylase 6 (288 aa).

Topologically, residues 1-4 are cytoplasmic; that stretch reads MDSQ. Residues 5-27 form a helical; Signal-anchor for type II membrane protein membrane-spanning segment; sequence YFLAFSLSLLLIFSQISSFSFSV. Residues 28 to 288 are Lumenal-facing; sequence DPTRITQLSW…GFCRKSCKAC (261 aa). Residues 116-238 enclose the Fe2OG dioxygenase domain; it reads NGEALQILHY…KWSATRWIHV (123 aa). Positions 134 and 136 each coordinate Fe cation. Asn-160 and Asn-210 each carry an N-linked (GlcNAc...) asparagine glycan. His-219 contacts Fe cation. Lys-229 provides a ligand contact to 2-oxoglutarate. The 41-residue stretch at 248 to 288 folds into the ShKT domain; that stretch reads CVDDHESCQEWADAGECEKNPMYMVGSETSLGFCRKSCKAC. Disulfide bonds link Cys-248/Cys-288, Cys-255/Cys-281, and Cys-264/Cys-285.

It belongs to the P4HA family. Fe(2+) is required as a cofactor. Requires L-ascorbate as cofactor.

The protein localises to the endoplasmic reticulum membrane. It carries out the reaction L-prolyl-[collagen] + 2-oxoglutarate + O2 = trans-4-hydroxy-L-prolyl-[collagen] + succinate + CO2. Functionally, catalyzes the post-translational formation of 4-hydroxyproline in -Xaa-Pro-Gly- sequences in proline-rich peptide sequences of plant glycoproteins and other proteins. Hydroxyprolines are important constituent of many plant cell wall glycoproteins such as extensins, hydroxyproline-rich glycoproteins, lectins and arabinogalactan proteins. In Arabidopsis thaliana (Mouse-ear cress), this protein is Probable prolyl 4-hydroxylase 6.